The primary structure comprises 218 residues: Large ribosomal subunit protein uL3 (218 aa).

An N5-methylglutamine modification is found at Gln-154.

It belongs to the universal ribosomal protein uL3 family. In terms of assembly, part of the 50S ribosomal subunit. Forms a cluster with proteins L14 and L19. Post-translationally, methylated by PrmB.

One of the primary rRNA binding proteins, it binds directly near the 3'-end of the 23S rRNA, where it nucleates assembly of the 50S subunit. This chain is Large ribosomal subunit protein uL3, found in Polynucleobacter asymbioticus (strain DSM 18221 / CIP 109841 / QLW-P1DMWA-1) (Polynucleobacter necessarius subsp. asymbioticus).